A 412-amino-acid chain; its full sequence is Argininosuccinate synthase (412 aa).

Residues 10–18 (AYSGGLDTS) and Ala36 each bind ATP. L-citrulline contacts are provided by Tyr87 and Ser92. Tyr87 carries the post-translational modification Phosphotyrosine. Lys112 carries the N6-acetyllysine modification. Tyr113 carries the phosphotyrosine modification. 115–123 (SHGATGKGN) is an ATP binding site. L-aspartate-binding residues include Thr119, Asn123, and Asp124. Asn123 provides a ligand contact to L-citrulline. Residue Arg127 participates in L-citrulline binding. N6-acetyllysine; by CLOCK occurs at positions 165 and 176. Phosphoserine is present on residues Ser177 and Ser180. Residues Ser180 and Ser189 each contribute to the L-citrulline site. Position 219 is a phosphoserine (Ser219). Residues Glu270 and Tyr282 each coordinate L-citrulline.

Belongs to the argininosuccinate synthase family. Type 1 subfamily. Homotetramer. Interacts with NMRAL1. Interacts with CLOCK; in a circadian manner. Forms tissue-specific complexes with ASL, SLC7A1, HSP90AA1 and nitric oxide synthase NOS1, NOS2 or NOS3; the complex regulates cell-autonomous L-arginine synthesis and citrulline recycling while channeling extracellular L-arginine to nitric oxide synthesis pathway. Acetylated by CLOCK in a circadian manner which negatively regulates its enzyme activity. Deacetylated by histone deacetylases. In terms of tissue distribution, widely expressed.

It is found in the cytoplasm. The protein localises to the cytosol. The enzyme catalyses L-citrulline + L-aspartate + ATP = 2-(N(omega)-L-arginino)succinate + AMP + diphosphate + H(+). It participates in amino-acid biosynthesis; L-arginine biosynthesis; L-arginine from L-ornithine and carbamoyl phosphate: step 2/3. Its pathway is nitrogen metabolism; urea cycle; (N(omega)-L-arginino)succinate from L-aspartate and L-citrulline: step 1/1. Its function is as follows. One of the enzymes of the urea cycle, the metabolic pathway transforming neurotoxic amonia produced by protein catabolism into inocuous urea in the liver of ureotelic animals. Catalyzes the formation of arginosuccinate from aspartate, citrulline and ATP and together with ASL it is responsible for the biosynthesis of arginine in most body tissues. The protein is Argininosuccinate synthase of Mus musculus (Mouse).